Consider the following 567-residue polypeptide: Proline--tRNA ligase (567 aa).

The protein belongs to the class-II aminoacyl-tRNA synthetase family. ProS type 1 subfamily. In terms of assembly, homodimer.

The protein resides in the cytoplasm. It catalyses the reaction tRNA(Pro) + L-proline + ATP = L-prolyl-tRNA(Pro) + AMP + diphosphate. Catalyzes the attachment of proline to tRNA(Pro) in a two-step reaction: proline is first activated by ATP to form Pro-AMP and then transferred to the acceptor end of tRNA(Pro). As ProRS can inadvertently accommodate and process non-cognate amino acids such as alanine and cysteine, to avoid such errors it has two additional distinct editing activities against alanine. One activity is designated as 'pretransfer' editing and involves the tRNA(Pro)-independent hydrolysis of activated Ala-AMP. The other activity is designated 'posttransfer' editing and involves deacylation of mischarged Ala-tRNA(Pro). The misacylated Cys-tRNA(Pro) is not edited by ProRS. The chain is Proline--tRNA ligase from Staphylococcus aureus (strain COL).